A 141-amino-acid chain; its full sequence is ATP synthase epsilon chain (141 aa).

It belongs to the ATPase epsilon chain family. As to quaternary structure, F-type ATPases have 2 components, CF(1) - the catalytic core - and CF(0) - the membrane proton channel. CF(1) has five subunits: alpha(3), beta(3), gamma(1), delta(1), epsilon(1). CF(0) has three main subunits: a, b and c.

It is found in the cell membrane. In terms of biological role, produces ATP from ADP in the presence of a proton gradient across the membrane. In Mycoplasma mobile (strain ATCC 43663 / 163K / NCTC 11711) (Mesomycoplasma mobile), this protein is ATP synthase epsilon chain.